The primary structure comprises 360 residues: DNA replication and repair protein RecF (360 aa).

30–37 (GQNGSGKT) provides a ligand contact to ATP.

Belongs to the RecF family.

The protein localises to the cytoplasm. Functionally, the RecF protein is involved in DNA metabolism; it is required for DNA replication and normal SOS inducibility. RecF binds preferentially to single-stranded, linear DNA. It also seems to bind ATP. In Shewanella oneidensis (strain ATCC 700550 / JCM 31522 / CIP 106686 / LMG 19005 / NCIMB 14063 / MR-1), this protein is DNA replication and repair protein RecF.